A 644-amino-acid chain; its full sequence is Protein SNOWY COTYLEDON 3 (644 aa).

Disordered stretches follow at residues 1 to 129 (MVAA…TRTE), 162 to 252 (ETAT…DGRL), and 290 to 414 (SDTD…SRVR). The segment covering 53–77 (SPSPSHSTTTTTTTATSTSTSSSSS) has biased composition (low complexity). The segment covering 91 to 112 (LSRTTNSASNLVYTPSSLPKRS) has biased composition (polar residues). Residues 172-190 (CTPERRRATPVRDQRENSK) are compositionally biased toward basic and acidic residues. Polar residues-rich tracts occupy residues 290-302 (SDTDSVSSGSTNG) and 314-332 (TRSLPRNGMASTKFWQETN). Low complexity-rich tracts occupy residues 343 to 370 (SPQCSSPSSRISSISSKFSQSKRFSSDS) and 397 to 412 (ATATSAPARTSSSPSR). The short motif at 463–466 (QWRF) is the QWRF motif element.

Belongs to the QWRF family. As to expression, expressed in young developing tissues, such as seedlings, roots, flowers, buds and young siliques, and to a lesser extent in mature green tissues.

The protein localises to the peroxisome. Probable microtubule-associated peroxisomal protein required for chloroplast biogenesis and for the formation of the prolamellar body and prothylakoids in etioplasts. Not involved in peroxisomal metabolism, including mobilization of storage compounds during germination, fatty acid beta-oxydation or photorespiration. This chain is Protein SNOWY COTYLEDON 3 (SCO3), found in Arabidopsis thaliana (Mouse-ear cress).